Reading from the N-terminus, the 298-residue chain is Nitric oxide synthase-interacting protein (298 aa).

The Nuclear localization signal motif lies at 78–101; that stretch reads KKEIARQMKAYDKQKNAKKAEMDE. Residues 126–157 form a disordered region; the sequence is LNPFTRKSDSGADTAEPSGSQQSSEEKGKQLP.

This sequence belongs to the NOSIP family.

The protein resides in the cytoplasm. The protein localises to the nucleus. It catalyses the reaction S-ubiquitinyl-[E2 ubiquitin-conjugating enzyme]-L-cysteine + [acceptor protein]-L-lysine = [E2 ubiquitin-conjugating enzyme]-L-cysteine + N(6)-ubiquitinyl-[acceptor protein]-L-lysine.. Functionally, E3 ubiquitin-protein ligase that is essential for proper development of the forebrain, the eye, and the face. Negatively regulates nitric oxide production by inducing nitric oxide synthase translocation to actin cytoskeleton and inhibiting its enzymatic activity. The sequence is that of Nitric oxide synthase-interacting protein (nosip) from Xenopus tropicalis (Western clawed frog).